Consider the following 956-residue polypeptide: RNA-silencing factor ers1 (956 aa).

The protein resides in the cytoplasm. The protein localises to the cytoskeleton. It is found in the microtubule organizing center. It localises to the spindle pole body. In terms of biological role, involved in RNAi-dependent heterochromatin formation and centromeric silencing. Required for the conversion of centromeric pre-small interfering RNA transcripts into small interfering RNAs, histone H3 'Lys9' methylation, and the recruitment of the RITS complex to centromeric sequences. This chain is RNA-silencing factor ers1 (ers1), found in Schizosaccharomyces pombe (strain 972 / ATCC 24843) (Fission yeast).